A 247-amino-acid chain; its full sequence is Small ribosomal subunit protein uS2 (247 aa).

It belongs to the universal ribosomal protein uS2 family.

The chain is Small ribosomal subunit protein uS2 from Pseudomonas syringae pv. syringae (strain B728a).